Here is a 321-residue protein sequence, read N- to C-terminus: Nucleotide-binding protein LI0459 (321 aa).

41 to 48 (GMSGAGKS) serves as a coordination point for ATP.

Belongs to the RapZ-like family.

Functionally, displays ATPase and GTPase activities. The chain is Nucleotide-binding protein LI0459 from Lawsonia intracellularis (strain PHE/MN1-00).